A 448-amino-acid chain; its full sequence is Protein EVI2B (448 aa).

The N-terminal stretch at 1-21 (MDPKYFILILFCGHLNNTFFS) is a signal peptide. Residues N16 and N50 are each glycosylated (N-linked (GlcNAc...) asparagine). At 22-202 (KTETITTEKQ…QTPQKNNYNS (181 aa)) the chain is on the extracellular side. Residues 74–108 (AKVTAGQPTPAVYTSSEKPEAHTSAGQPLAYNTKQ) are disordered. The span at 97–108 (SAGQPLAYNTKQ) shows a compositional bias: polar residues. N114 carries N-linked (GlcNAc...) asparagine glycosylation. A helical transmembrane segment spans residues 203–226 (IAAILIGVLLTSMLVAIIIIVLWK). Topologically, residues 227 to 448 (CLRKPVLNDQ…SLPPPPAELL (222 aa)) are cytoplasmic. T249 carries the post-translational modification Phosphothreonine. S268, S271, S278, and S294 each carry phosphoserine. 2 disordered regions span residues 298–372 (IEDS…DSTS) and 427–448 (SIPPNSDQDLNESLPPPPAELL). Composition is skewed to polar residues over residues 313 to 333 (VNGTSEDSADGSTVGTAVSSS) and 350 to 372 (QESNQSDKPTMTIVSPLPNDSTS).

Bone marrow, peripheral blood mononuclear cells, fibroblasts and Epstein-Barr virus-transformed lymphoblastoid cell lines. Strongly expressed in granulocytic cells, and weakly on lymphocytes cells.

It localises to the membrane. In terms of biological role, required for granulocyte differentiation and functionality of hematopoietic progenitor cells through the control of cell cycle progression and survival of hematopoietic progenitor cells. In Homo sapiens (Human), this protein is Protein EVI2B.